We begin with the raw amino-acid sequence, 467 residues long: Neutral protease 2 homolog NFIA_031120 (467 aa).

The signal sequence occupies residues 1–19 (MKITALASAILAVVHGALA). A propeptide spanning residues 20-172 (LPARAPALDI…PASIKPLDRR (153 aa)) is cleaved from the precursor. Cystine bridges form between Cys179-Cys251 and Cys258-Cys276. His300 is a binding site for Zn(2+). Residue Glu301 is part of the active site. Positions 304 and 315 each coordinate Zn(2+). Residues 359-451 (WDGNSQPGQT…TMWDGSSEPG (93 aa)) show a composition bias toward polar residues. A disordered region spans residues 359-467 (WDGNSQPGQT…HTTWGNFYQA (109 aa)).

Belongs to the peptidase M35 family. Requires Zn(2+) as cofactor.

The protein resides in the secreted. The catalysed reaction is Preferential cleavage of bonds with hydrophobic residues in P1'. Also 3-Asn-|-Gln-4 and 8-Gly-|-Ser-9 bonds in insulin B chain.. Functionally, secreted metalloproteinase that allows assimilation of proteinaceous substrates. Shows high activities on basic nuclear substrates such as histone and protamine. The sequence is that of Neutral protease 2 homolog NFIA_031120 from Neosartorya fischeri (strain ATCC 1020 / DSM 3700 / CBS 544.65 / FGSC A1164 / JCM 1740 / NRRL 181 / WB 181) (Aspergillus fischerianus).